The chain runs to 104 residues: Iron-sulfur cluster assembly protein CyaY (104 aa).

Belongs to the frataxin family.

Functionally, involved in iron-sulfur (Fe-S) cluster assembly. May act as a regulator of Fe-S biogenesis. The chain is Iron-sulfur cluster assembly protein CyaY from Vibrio campbellii (strain ATCC BAA-1116).